Consider the following 134-residue polypeptide: Large ribosomal subunit protein bL17 (134 aa).

It belongs to the bacterial ribosomal protein bL17 family. As to quaternary structure, part of the 50S ribosomal subunit. Contacts protein L32.

The chain is Large ribosomal subunit protein bL17 from Thioalkalivibrio sulfidiphilus (strain HL-EbGR7).